Consider the following 971-residue polypeptide: MDSAETELTPAPEGRKRYSDIFQSLDNLEISLGNVTFDPLAGDPVRREDLEPDKADTATVVTEENSEASSWRDLSPEGPAPLTEEELDLRLIRTKGGVDAALEYAKAWSRYAKELLAWTDKRANYELEFAKSIMKLAEAGKVSILQQSQMPLQYIYTLFLEHDLSLGALALETVAQQKRDYYQPLAAKRMEIEKWRKEFKEQWLKEQKRMNEAVQALRRSELQYIQRREDLRARSQGSPEDPPSQASPGSNKQQERRRRSREEAQAKAHEAEALYQACVREANSRQQDLETTKRRIVSHVRKLVLQGDEVLRRVTLGLFELRGAQAERGPRSFSALAECCVPFEPGQRYQEFVRTLQPGAPPPPSPAFCFQEFTAVVHSFPQDTKKKFSGPLPPRLEEEGSPEPGPWEVASLGSQGIPGSDVDSVGGGSESRSLDSPTSSPGAGARRLVKASSTGTESSDDFEERDPDLGDGIENGVGSPFRKWTLSTAAQTHRLRRLRGPAKCRECEAFMVSGTECEECFLTCHKRCLETLLILCGHRRLPARMSLFGVDFLQLPRDFPEEVPFVITRCTAEIEHRALGLQGIYRVSGSRVRVERLCQAFENGRALVELSGNSPHDITSVLKRFLQELTDPVVPFHLYDAFISLAKTLHADPGDDPGTPNPSPEIIRSLKTLLVQLPDSNYSTLRHLVAHLFRVAARFEENKMSANNLGIVFGPTLLRPPDGPRATGASPVACLLDSGHQAQLVEFLIVHYEQIFGMDELPLASEPLTQDPGLAPACLESSPQHPASLLAQDTQPLTIALDSSPDPKHHSALEKCPEVTPPELATLQRDQREEEVEDTRDGAGDGSSHCPEDLALGAQSRGHFSRQPVKYSRGGVRPVTHQLSSLALVASKLCEETPVTVSAVHRGSLRVRGLGPAAACPEGSPLRRNPLPKHFEITQETARLLSKLNSDAVSRTTCCADPEPEESEEHL.

Ser-19 is subject to Phosphoserine. Disordered stretches follow at residues 41 to 79 (AGDP…PEGP), 231 to 267 (LRAR…AQAK), and 383 to 476 (DTKK…IENG). Residues 44 to 56 (PVRREDLEPDKAD) are compositionally biased toward basic and acidic residues. A compositionally biased stretch (polar residues) spans 59-69 (TVVTEENSEAS). Phosphoserine is present on residues Ser-75, Ser-235, Ser-238, Ser-247, Ser-436, and Ser-440. Residues 85–348 (EELDLRLIRT…CCVPFEPGQR (264 aa)) form the F-BAR domain. A compositionally biased stretch (acidic residues) spans 458-471 (SSDDFEERDPDLGD). Residues 492 to 536 (THRLRRLRGPAKCRECEAFMVSGTECEECFLTCHKRCLETLLILC) form a Phorbol-ester/DAG-type zinc finger. In terms of domain architecture, Rho-GAP spans 553–756 (LQLPRDFPEE…FLIVHYEQIF (204 aa)). Phosphothreonine is present on Thr-659. The disordered stretch occupies residues 799-865 (IALDSSPDPK…LGAQSRGHFS (67 aa)). A compositionally biased stretch (basic and acidic residues) spans 805-817 (PDPKHHSALEKCP). 3 positions are modified to phosphoserine: Ser-884, Ser-908, and Ser-924.

In terms of assembly, interacts with GEM through its N-terminal.

In terms of biological role, stimulates, in vitro and in vivo, the GTPase activity of RhoA. The chain is GEM-interacting protein (Gmip) from Mus musculus (Mouse).